The chain runs to 227 residues: MKINILTLFPRYFEVFCRESIIGKAIKHKKITINVVNFRDFSKNKHKKVDDYVYGGGPGLLLQIQPVVDALEKVGGLKIALSPQGQKFDQGVARKLAKEDEITILCGHYEGFDQRIIDNFIDFELSLGDFILTGGEIAAMAIIDAIIRLKPDIINPESLKNETFNDFLLDFPQYSRPANFRGLEVPNVLISGNHREIGEWRQEQRELITKKKRPDLWEKFLKIKNKK.

S-adenosyl-L-methionine contacts are provided by residues Gly107 and Leu127–Leu132.

Belongs to the RNA methyltransferase TrmD family. Homodimer.

The protein localises to the cytoplasm. The enzyme catalyses guanosine(37) in tRNA + S-adenosyl-L-methionine = N(1)-methylguanosine(37) in tRNA + S-adenosyl-L-homocysteine + H(+). Functionally, specifically methylates guanosine-37 in various tRNAs. In Mesomycoplasma hyopneumoniae (strain 232) (Mycoplasma hyopneumoniae), this protein is tRNA (guanine-N(1)-)-methyltransferase.